Reading from the N-terminus, the 181-residue chain is CASP-like protein 5A1 (181 aa).

Residues 1 to 38 are Cytoplasmic-facing; sequence MFASRPVVHPLEVAAPAHPVQQPAPGVLMKDLPGMPGT. The chain crosses the membrane as a helical span at residues 39–59; that stretch reads PGGLGLRVLQLLFAAISLAVM. The Extracellular portion of the chain corresponds to 60-77; the sequence is SSTADFASVSAFCYLITT. A helical transmembrane segment spans residues 78–98; sequence TVLQCVWSLTVAIVDIYALLV. The Cytoplasmic segment spans residues 99-115; sequence KRCLQNRRAVTLFSIGD. The chain crosses the membrane as a helical span at residues 116-136; sequence GITWLVSFSGACAAAGIPVLI. At 137–153 the chain is on the extracellular side; sequence DADLIMCSENPCASFQT. Residues 154-174 form a helical membrane-spanning segment; it reads AVAMGFMCCFSLLPSFLLNFY. Over 175-181 the chain is Cytoplasmic; sequence SIASSHG.

The protein belongs to the Casparian strip membrane proteins (CASP) family. Homodimer and heterodimers.

It is found in the cell membrane. The chain is CASP-like protein 5A1 from Zea mays (Maize).